The sequence spans 98 residues: Ferredoxin-like protein (98 aa).

A 4Fe-4S ferredoxin-type domain is found at Gly57–Pro87.

It to ferredoxins from P.putida and C.tartarivorum, ferredoxin I from A.vinelandii, ferredoxin II from D.desulfuricans.

In terms of biological role, could be a 3Fe-4S cluster-containing protein. This Bradyrhizobium diazoefficiens (strain JCM 10833 / BCRC 13528 / IAM 13628 / NBRC 14792 / USDA 110) protein is Ferredoxin-like protein (fixX).